The chain runs to 314 residues: Phosphoribosylaminoimidazole-succinocarboxamide synthase (314 aa).

Belongs to the SAICAR synthetase family.

The enzyme catalyses 5-amino-1-(5-phospho-D-ribosyl)imidazole-4-carboxylate + L-aspartate + ATP = (2S)-2-[5-amino-1-(5-phospho-beta-D-ribosyl)imidazole-4-carboxamido]succinate + ADP + phosphate + 2 H(+). The protein operates within purine metabolism; IMP biosynthesis via de novo pathway; 5-amino-1-(5-phospho-D-ribosyl)imidazole-4-carboxamide from 5-amino-1-(5-phospho-D-ribosyl)imidazole-4-carboxylate: step 1/2. The chain is Phosphoribosylaminoimidazole-succinocarboxamide synthase from Bacteroides thetaiotaomicron (strain ATCC 29148 / DSM 2079 / JCM 5827 / CCUG 10774 / NCTC 10582 / VPI-5482 / E50).